The primary structure comprises 370 residues: Glutamate 5-kinase (370 aa).

Lys-17 is an ATP binding site. Substrate is bound by residues Ser-57, Asp-144, and Asn-156. ATP is bound by residues 176–177 (SD) and 220–226 (TGGMASK). The PUA domain occupies 282-360 (AGALTLDDGA…HELPVEMRRP (79 aa)).

This sequence belongs to the glutamate 5-kinase family.

It localises to the cytoplasm. The enzyme catalyses L-glutamate + ATP = L-glutamyl 5-phosphate + ADP. It functions in the pathway amino-acid biosynthesis; L-proline biosynthesis; L-glutamate 5-semialdehyde from L-glutamate: step 1/2. In terms of biological role, catalyzes the transfer of a phosphate group to glutamate to form L-glutamate 5-phosphate. The protein is Glutamate 5-kinase of Mycolicibacterium smegmatis (strain ATCC 700084 / mc(2)155) (Mycobacterium smegmatis).